We begin with the raw amino-acid sequence, 226 residues long: MARGKIEIKRIENSTNRQVTYSKRRNGIFKKASELTVLCDAKVSIIMLSSTGKLHEYISPSTTTKQIFDQYQNTLGVDLWSYHYERMQENLKKLKDVNKNLRKEIRQRMGEHLSDLSVEELRDLEQEMESSLKMVRDRKYQVINNQIETFKKKVRNVEQIHKNLLHEFDARDRDQHYGLVDNGGDYESVLGFSNGSSPVFALSLQPNPPNDLHSGVGSDLTFTLLE.

An MADS-box domain is found at 1 to 61; the sequence is MARGKIEIKR…GKLHEYISPS (61 aa). Residues 84 to 174 enclose the K-box domain; that stretch reads YERMQENLKK…LHEFDARDRD (91 aa).

In terms of tissue distribution, expressed during flower development in stamens and petals.

Its subcellular location is the nucleus. In terms of biological role, probable transcription factor involved in flower development. In Vitis vinifera (Grape), this protein is Agamous-like MADS-box protein AP3.